Consider the following 131-residue polypeptide: Large ribosomal subunit protein bL12 (131 aa).

It belongs to the bacterial ribosomal protein bL12 family. In terms of assembly, homodimer. Part of the ribosomal stalk of the 50S ribosomal subunit. Forms a multimeric L10(L12)X complex, where L10 forms an elongated spine to which 2 to 4 L12 dimers bind in a sequential fashion. Binds GTP-bound translation factors.

Forms part of the ribosomal stalk which helps the ribosome interact with GTP-bound translation factors. Is thus essential for accurate translation. This chain is Large ribosomal subunit protein bL12, found in Prochlorococcus marinus (strain NATL2A).